The primary structure comprises 347 residues: NADH-ubiquinone oxidoreductase chain 2 (347 aa).

A run of 10 helical transmembrane segments spans residues 13–33 (IILGTMIVMTSSHWLLVWIGF), 59–79 (YFLTQATASMLLMLAVVTNLL), 96–116 (AVMTLALVMKLGLSPFHFWVP), 122–142 (IPLSSGLVLLTWQKLAPLSVL), 149–169 (VSPTLLLTVSLMSIAVGGWGG), 178–198 (ILAYSSIAHMGWMTAVLAYNP), 201–221 (TLLNLTLYILMTTTTFLLFMF), 247–267 (IMLSLGGLPPLTGFLPKWMII), 274–294 (ESLLLPTLMAMMALLSLYFYM), and 323–343 (VPLLPPMITLFTLALPLAPAL).

The protein belongs to the complex I subunit 2 family. As to quaternary structure, core subunit of respiratory chain NADH dehydrogenase (Complex I) which is composed of 45 different subunits. Interacts with TMEM242.

It localises to the mitochondrion inner membrane. The catalysed reaction is a ubiquinone + NADH + 5 H(+)(in) = a ubiquinol + NAD(+) + 4 H(+)(out). In terms of biological role, core subunit of the mitochondrial membrane respiratory chain NADH dehydrogenase (Complex I) which catalyzes electron transfer from NADH through the respiratory chain, using ubiquinone as an electron acceptor. Essential for the catalytic activity and assembly of complex I. The sequence is that of NADH-ubiquinone oxidoreductase chain 2 from Megaderma spasma (Lesser false vampire bat).